The following is a 449-amino-acid chain: FAD-linked oxidoreductase janO (449 aa).

The region spanning 32-203 (PDAQPLAIIK…TRFHLNTRPL (172 aa)) is the FAD-binding PCMH-type domain.

It belongs to the oxygen-dependent FAD-linked oxidoreductase family. It depends on FAD as a cofactor.

Its pathway is secondary metabolite biosynthesis. FAD-linked oxidoreductase; part of the gene cluster that mediates the biosynthesis of the indole diterpenes janthitremanes such as shearinine K or shearinine A. The geranylgeranyl diphosphate (GGPP) synthase janG catalyzes the first step in janthitremane biosynthesis via conversion of farnesyl pyrophosphate and isopentyl pyrophosphate into geranylgeranyl pyrophosphate (GGPP). Condensation of indole-3-glycerol phosphate with GGPP by the prenyl transferase janC then forms 3-geranylgeranylindole (3-GGI). Epoxidation by the FAD-dependent monooxygenase janM leads to a epoxidized-GGI that is substrate of the terpene cyclase janB for cyclization to yield paspaline. Paspaline is subsequently converted to 13-desoxypaspaline by the cytochrome P450 monooxygenase janP, via beta-PC-M6 in a series of alpha-face oxidations. The cytochrome P450 monooxygenase janQ is proposed to carry out sequential beta-face oxidation steps at C-7 and C-13 of 13-desoxypaspaline to form paspalicine and paspalinine respectively. The indole diterpene prenyltransferase janD may then convert paspalinine into shearinine K which is substrate of janO and/or additional enzymes for oxidation and cyclization to generate shearinine A. The sequence is that of FAD-linked oxidoreductase janO from Penicillium janthinellum (Penicillium vitale).